The sequence spans 629 residues: tRNA uridine 5-carboxymethylaminomethyl modification enzyme MnmG (629 aa).

FAD-binding positions include 14 to 19 (GAGHAG), valine 126, and serine 181. Position 273–287 (273–287 (GPRYCPSIEDKVVRF)) interacts with NAD(+). FAD is bound at residue glutamine 370.

The protein belongs to the MnmG family. As to quaternary structure, homodimer. Heterotetramer of two MnmE and two MnmG subunits. Requires FAD as cofactor.

It is found in the cytoplasm. In terms of biological role, NAD-binding protein involved in the addition of a carboxymethylaminomethyl (cmnm) group at the wobble position (U34) of certain tRNAs, forming tRNA-cmnm(5)s(2)U34. This is tRNA uridine 5-carboxymethylaminomethyl modification enzyme MnmG from Geobacillus kaustophilus (strain HTA426).